A 233-amino-acid polypeptide reads, in one-letter code: tRNA (guanine-N(7)-)-methyltransferase (233 aa).

The tract at residues 1–23 is disordered; that stretch reads MSPQDRPSRTTEAFFGRRRGKPV. Glu-64, Glu-89, Asp-116, and Asp-138 together coordinate S-adenosyl-L-methionine. Asp-138 is a catalytic residue. Substrate contacts are provided by residues Lys-142, Asp-174, and 212 to 215; that span reads TRYE.

The protein belongs to the class I-like SAM-binding methyltransferase superfamily. TrmB family.

It carries out the reaction guanosine(46) in tRNA + S-adenosyl-L-methionine = N(7)-methylguanosine(46) in tRNA + S-adenosyl-L-homocysteine. It participates in tRNA modification; N(7)-methylguanine-tRNA biosynthesis. Its function is as follows. Catalyzes the formation of N(7)-methylguanine at position 46 (m7G46) in tRNA. The polypeptide is tRNA (guanine-N(7)-)-methyltransferase (Mesorhizobium japonicum (strain LMG 29417 / CECT 9101 / MAFF 303099) (Mesorhizobium loti (strain MAFF 303099))).